Reading from the N-terminus, the 180-residue chain is p-cumate 2,3-dioxygenase system, small oxygenase component (180 aa).

It belongs to the bacterial ring-hydroxylating dioxygenase beta subunit family. The p-cumate 2,3-dioxygenase multicomponent enzyme system is composed of an electron transfer component and a dioxygenase component (iron sulfur protein (ISP)). The electron transfer component is composed of a ferredoxin reductase (CmtAa) and a ferredoxin (CmtAd), and the dioxygenase component is formed of a large alpha subunit (CmtAb) and a small beta subunit (CmtAc).

It participates in aromatic compound metabolism; p-cumate degradation; acetaldehyde and pyruvate from p-cumate. Functionally, component of the p-cumate 2,3-dioxygenase multicomponent enzyme system which catalyzes the incorporation of both atoms of molecular oxygen into p-cumate to form cis-2,3-dihydroxy-2,3-dihydro-p-cumate. The beta subunit seems to have a structural role in the holoenzyme. Also able to catalyze the cis-dihydroxylation of indole-2-carboxylate and indole-3-carboxylate. The sequence is that of p-cumate 2,3-dioxygenase system, small oxygenase component from Pseudomonas putida (Arthrobacter siderocapsulatus).